We begin with the raw amino-acid sequence, 810 residues long: Protein 4.1 (810 aa).

Residues 1–124 are disordered; sequence MTTEKSLVAE…KEIEFGTSLD (124 aa). S14 carries the phosphoserine modification. T61 bears the Phosphothreonine mark. Residues 62–76 show a composition bias toward basic and acidic residues; the sequence is PTHEDLTKNKERTSE. A phosphoserine mark is found at S85, S86, S96, S105, S122, S150, S152, S153, S189, and S192. Residues 102 to 118 are compositionally biased toward basic and acidic residues; the sequence is DVESAKEKCEGGQKEIE. Residues 152–203 form a disordered region; the sequence is SSAETQPAQEEHREDPDFETKEGGGLEECSKIEVKEESPESKAERELKASQK. Residues 160–200 show a composition bias toward basic and acidic residues; sequence QEEHREDPDFETKEGGGLEECSKIEVKEESPESKAERELKA. The 282-residue stretch at 211–492 folds into the FERM domain; that stretch reads MHCKVSLLDD…EHHTFFRLTS (282 aa). A Phosphotyrosine modification is found at Y223. T379 carries the post-translational modification Phosphothreonine. The tract at residues 518-613 is disordered; it reads TRQASALIDR…DQAEPEPTEV (96 aa). Residues S522, S541, S543, and S555 each carry the phosphoserine modification. Residues 587–601 are compositionally biased toward basic and acidic residues; it reads AQKETVKDEEKKEEG. The spectrin--actin-binding stretch occupies residues 615-659; sequence KDLDKSQEEIKKHHASISELKKNFMESVPEPRPSEWDKRLSTHSP. Phosphoserine occurs at positions 620, 630, 655, and 658. The interval 660-810 is C-terminal (CTD); sequence FRTLNINGQL…VHQETEISEE (151 aa). Phosphothreonine is present on residues T682 and T805.

In terms of assembly, binds with a high affinity to glycophorin and with lower affinity to band III protein. Associates with the nuclear mitotic apparatus. Binds calmodulin, CPAP and DLG1. Also found to associate with contractile apparatus and tight junctions. Interacts with NUMA1; this interaction is negatively regulated by CDK1 during metaphase and promotes for anaphase-specific localization of NUMA1 in symmetrically dividing cells. Interacts with ATP2B1; regulates small intestinal calcium absorption through regulation of membrane expression of ATP2B1. Post-translationally, O-glycosylated; contains N-acetylglucosamine side chains in the C-terminal domain. Phosphorylated at multiple sites by different protein kinases and each phosphorylation event selectively modulates the protein's functions.

The protein localises to the nucleus. Its subcellular location is the cytoplasm. It localises to the cytoskeleton. It is found in the cell cortex. In terms of biological role, protein 4.1 is a major structural element of the erythrocyte membrane skeleton. It plays a key role in regulating membrane physical properties of mechanical stability and deformability by stabilizing spectrin-actin interaction. Recruits DLG1 to membranes. Required for dynein-dynactin complex and NUMA1 recruitment at the mitotic cell cortex during anaphase. This chain is Protein 4.1, found in Canis lupus familiaris (Dog).